Reading from the N-terminus, the 35-residue chain is Pheromone-binding protein (35 aa).

Belongs to the PBP/GOBP family. As to expression, antenna.

In terms of biological role, this major soluble protein in olfactory sensilla of male moths might serve to solubilize the extremely hydrophobic pheromone molecules and to transport pheromone through the aqueous lymph to receptors located on olfactory cilia. The sequence is that of Pheromone-binding protein from Hyalophora cecropia (Cecropia moth).